Consider the following 566-residue polypeptide: Tissue-type plasminogen activator (566 aa).

An N-terminal signal peptide occupies residues 1–21 (MMSAMKTEFLCVLLLCGAVFT). The propeptide occupies 22-33 (SPSQETYRRLRR). A propeptide spans 34 to 36 (GAR) (removed by plasmin). The Fibronectin type-I domain maps to 40–82 (VTCRDGKTQMTYRQHDSWLRPLLRGNQVEHCWCDGGRAQCHSV). 17 cysteine pairs are disulfide-bonded: Cys-42/Cys-72, Cys-70/Cys-79, Cys-87/Cys-98, Cys-92/Cys-109, Cys-111/Cys-120, Cys-128/Cys-209, Cys-149/Cys-191, Cys-180/Cys-204, Cys-219/Cys-300, Cys-240/Cys-282, Cys-271/Cys-295, Cys-303/Cys-434, Cys-346/Cys-362, Cys-354/Cys-423, Cys-448/Cys-523, Cys-480/Cys-496, and Cys-513/Cys-541. Residues 43-53 (RDGKTQMTYRQ) are important for binding to annexin A2. The EGF-like domain occupies 83–121 (PVRSCSEPWCFNGGTCRQALYSSDFVCQCPEGFMGKLCE). 2 Kringle domains span residues 128–209 (CYKD…TPAC) and 219–300 (CYTG…VPQC). The N-linked (GlcNAc...) asparagine glycan is linked to Asn-153. Residues 315–565 (IKGGLFADIT…YLDWIRDNTR (251 aa)) form the Peptidase S1 domain. Residues His-361 and Asp-410 each act as charge relay system in the active site. Residue Asn-487 is glycosylated (N-linked (GlcNAc...) asparagine). Ser-517 serves as the catalytic Charge relay system.

This sequence belongs to the peptidase S1 family. In terms of assembly, heterodimer of chain A and chain B held by a disulfide bond. Binds to fibrin with high affinity. This interaction leads to an increase in the catalytic efficiency of the enzyme due to an increase in affinity for plasminogen. Similarly, binding to heparin increases the activation of plasminogen. Binds to annexin A2, cytokeratin-8, fibronectin and laminin. Binds to mannose receptor and the low-density lipoprotein receptor-related protein (LRP1); these proteins are involved in TPA clearance. Binds LRP1B; binding is followed by internalization and degradation. Forms heterodimer with SERPINA5. Interacts with SERPINE1. In complex with SERPINE1, interacts with SORL1. In terms of processing, the single chain, almost fully active enzyme, can be further processed into a two-chain fully active form by a cleavage after Arg-314 catalyzed by plasmin, tissue kallikrein or factor Xa.

It is found in the secreted. It localises to the extracellular space. The catalysed reaction is Specific cleavage of Arg-|-Val bond in plasminogen to form plasmin.. With respect to regulation, inhibited by SERPINA5. Inhibited by SERPINE1. Converts the abundant, but inactive, zymogen plasminogen to plasmin by hydrolyzing a single Arg-Val bond in plasminogen. By controlling plasmin-mediated proteolysis, it plays an important role in tissue remodeling and degradation, in cell migration and many other physiopathological events. During oocyte activation, plays a role in cortical granule reaction in the zona reaction, which contributes to the block to polyspermy. This chain is Tissue-type plasminogen activator (PLAT), found in Bos taurus (Bovine).